A 32-amino-acid chain; its full sequence is Cruzioseptin-9 (32 aa).

The residue at position 29 (Gln-29) is a Glutamine amide. The propeptide occupies 31–32 (EQ).

Expressed by the skin glands.

Its subcellular location is the secreted. In terms of biological role, has antimicrobial activity. The protein is Cruzioseptin-9 of Cruziohyla calcarifer (Splendid leaf frog).